A 150-amino-acid polypeptide reads, in one-letter code: Cytochrome c oxidase subunit 5A, mitochondrial (150 aa).

Residues 1 to 41 (MLGAALRRCAVAATTRADPRGLLHSARTPGPAVAIQSVRCY) constitute a mitochondrion transit peptide. The SIFI-degron signature appears at 2–17 (LGAALRRCAVAATTRA). N6-acetyllysine is present on residues Lys-87 and Lys-113. Residue Thr-141 is modified to Phosphothreonine.

Belongs to the cytochrome c oxidase subunit 5A family. Component of the cytochrome c oxidase (complex IV, CIV), a multisubunit enzyme composed of 14 subunits. The complex is composed of a catalytic core of 3 subunits MT-CO1, MT-CO2 and MT-CO3, encoded in the mitochondrial DNA, and 11 supernumerary subunits COX4I1 (or COX4I2), COX5A, COX5B, COX6A1 (or COX6A2), COX6B1 (or COX6B2), COX6C, COX7A2 (or COX7A1), COX7B, COX7C, COX8A and NDUFA4, which are encoded in the nuclear genome. The complex exists as a monomer or a dimer and forms supercomplexes (SCs) in the inner mitochondrial membrane with NADH-ubiquinone oxidoreductase (complex I, CI) and ubiquinol-cytochrome c oxidoreductase (cytochrome b-c1 complex, complex III, CIII), resulting in different assemblies (supercomplex SCI(1)III(2)IV(1) and megacomplex MCI(2)III(2)IV(2)). Interacts with AFG1L. Interacts with RAB5IF. In response to mitochondrial stress, the precursor protein is ubiquitinated by the SIFI complex in the cytoplasm before mitochondrial import, leading to its degradation. Within the SIFI complex, UBR4 initiates ubiquitin chain that are further elongated or branched by KCMF1.

The protein resides in the mitochondrion inner membrane. It participates in energy metabolism; oxidative phosphorylation. Its function is as follows. Component of the cytochrome c oxidase, the last enzyme in the mitochondrial electron transport chain which drives oxidative phosphorylation. The respiratory chain contains 3 multisubunit complexes succinate dehydrogenase (complex II, CII), ubiquinol-cytochrome c oxidoreductase (cytochrome b-c1 complex, complex III, CIII) and cytochrome c oxidase (complex IV, CIV), that cooperate to transfer electrons derived from NADH and succinate to molecular oxygen, creating an electrochemical gradient over the inner membrane that drives transmembrane transport and the ATP synthase. Cytochrome c oxidase is the component of the respiratory chain that catalyzes the reduction of oxygen to water. Electrons originating from reduced cytochrome c in the intermembrane space (IMS) are transferred via the dinuclear copper A center (CU(A)) of subunit 2 and heme A of subunit 1 to the active site in subunit 1, a binuclear center (BNC) formed by heme A3 and copper B (CU(B)). The BNC reduces molecular oxygen to 2 water molecules using 4 electrons from cytochrome c in the IMS and 4 protons from the mitochondrial matrix. This chain is Cytochrome c oxidase subunit 5A, mitochondrial (COX5A), found in Homo sapiens (Human).